A 669-amino-acid chain; its full sequence is Cysteine-rich receptor-like protein kinase 34 (669 aa).

Residues 1 to 23 (MKLKISFLPTFLIFLISLDSVTA) form the signal peptide. Gnk2-homologous domains lie at 24–123 (QEIC…NVSF) and 133–246 (ETLY…LYPY). Topologically, residues 24–285 (QEICFSGFFK…SDRANTTIKG (262 aa)) are extracellular. 8 N-linked (GlcNAc...) asparagine glycosylation sites follow: Asn35, Asn52, Asn103, Asn120, Asn147, Asn172, Asn252, and Asn280. The chain crosses the membrane as a helical span at residues 286–306 (IIVAIVVPIIVILVSLVVLLV). Residues 307 to 669 (VCRRKKSYKT…DASITEFYPR (363 aa)) are Cytoplasmic-facing. In terms of domain architecture, Protein kinase spans 345-624 (FSDSNMIGRG…MMLTSSTTTL (280 aa)). Residues 351-359 (IGRGGFGEV) and Lys373 each bind ATP. At Tyr418 the chain carries Phosphotyrosine. Asp470 functions as the Proton acceptor in the catalytic mechanism. Residue Ser474 is modified to Phosphoserine. At Thr510 the chain carries Phosphothreonine. The residue at position 518 (Tyr518) is a Phosphotyrosine.

It belongs to the protein kinase superfamily. Ser/Thr protein kinase family. CRK subfamily.

Its subcellular location is the membrane. The catalysed reaction is L-seryl-[protein] + ATP = O-phospho-L-seryl-[protein] + ADP + H(+). It catalyses the reaction L-threonyl-[protein] + ATP = O-phospho-L-threonyl-[protein] + ADP + H(+). The protein is Cysteine-rich receptor-like protein kinase 34 of Arabidopsis thaliana (Mouse-ear cress).